Here is a 312-residue protein sequence, read N- to C-terminus: Olfactory receptor 4K17 (312 aa).

At 1-25 the chain is on the extracellular side; sequence MKLLNQSQVSEFILLGLTSSQDVEF. N-linked (GlcNAc...) asparagine glycosylation is present at Asn-5. Residues 26-49 traverse the membrane as a helical segment; the sequence is LLFALFSVIYVVTVLGNLLIIVTV. Residues 50 to 57 lie on the Cytoplasmic side of the membrane; it reads FNTPNLNT. A helical membrane pass occupies residues 58 to 79; sequence PMYFLLGNLSFVDMTLASFATP. The Extracellular portion of the chain corresponds to 80-100; it reads KVILNLLKKQKVISFAGCFTQ. A disulfide bond links Cys-97 and Cys-189. Residues 101-120 traverse the membrane as a helical segment; that stretch reads IFLLHLLGGVEMVLLVSMAF. Topologically, residues 121–139 are cytoplasmic; it reads DRYVAICKPLHYMTIMNKK. A helical membrane pass occupies residues 140–158; the sequence is VCVLLVVTSWLLGLLHSGF. The Extracellular segment spans residues 159-195; sequence QIPFAVNLPFCGPNVVDSIFCDLPLVTKLACIDIYFV. A helical membrane pass occupies residues 196 to 219; the sequence is QVVIVANSGIISLSCFIILLISYS. The Cytoplasmic segment spans residues 220–235; the sequence is LILITIKNHSPTGQSK. A helical membrane pass occupies residues 236-258; sequence ARSTLTAHITVVILFFGPCIFIY. Topologically, residues 259-269 are extracellular; that stretch reads IWPFGNHSVDK. N-linked (GlcNAc...) asparagine glycosylation occurs at Asn-264. Residues 270 to 289 form a helical membrane-spanning segment; it reads FLAVFYTIITPILNPIIYTL. At 290–312 the chain is on the cytoplasmic side; that stretch reads RNKEMKISMKKLWRAFVNSREDT.

The protein belongs to the G-protein coupled receptor 1 family.

Its subcellular location is the cell membrane. Odorant receptor. This Homo sapiens (Human) protein is Olfactory receptor 4K17 (OR4K17).